Here is a 641-residue protein sequence, read N- to C-terminus: Chaperone protein DnaK (641 aa).

The residue at position 200 (Thr200) is a Phosphothreonine; by autocatalysis. Residues 605 to 623 show a composition bias toward low complexity; the sequence is AAEQGGSADAASGNAQASK. The disordered stretch occupies residues 605–627; sequence AAEQGGSADAASGNAQASKAADD.

The protein belongs to the heat shock protein 70 family.

Its function is as follows. Acts as a chaperone. In Xanthomonas oryzae pv. oryzae (strain MAFF 311018), this protein is Chaperone protein DnaK.